The primary structure comprises 62 residues: MSGRGFLLLALLLLVTVEATKVEKNKPGVLDIPVKSNSDDDSIFRYGRRDMQSPLLSERLRF.

The N-terminal stretch at 1 to 19 (MSGRGFLLLALLLLVTVEA) is a signal peptide. A propeptide spanning residues 20–26 (TKVEKNK) is cleaved from the precursor. Tyrosine amide is present on Tyr-46. The propeptide occupies 47–62 (GRRDMQSPLLSERLRF).

Belongs to the FARP (FMRFamide related peptide) family. Expressed by the venom duct.

The protein resides in the secreted. This peptide does not show activity on human and mouse sensory neuron-specific G-protein coupled receptors MRGPRX1. The chain is Conorfamide-Tx1 from Conus textile (Cloth-of-gold cone).